A 456-amino-acid polypeptide reads, in one-letter code: Tyrosinase-like protein 2 (456 aa).

A signal peptide spans 1–22 (MNTMALFGKVILLQFLIGVGFC). Cu cation-binding residues include His145, His154, His163, His295, His299, and His322.

Cu(2+) is required as a cofactor. As to expression, prismatic layer of shell (at protein level).

The protein localises to the secreted. The polypeptide is Tyrosinase-like protein 2 (Margaritifera margaritifera (Freshwater pearl mussel)).